We begin with the raw amino-acid sequence, 562 residues long: Methionine--tRNA ligase, mitochondrial (562 aa).

Residues 1 to 10 (MLRSLALRTF) constitute a mitochondrion transit peptide. The short motif at 43 to 53 (FYVNAAPHLGH) is the 'HIGH' region element. Positions 332–336 (KMSKS) match the 'KMSKS' region motif. Lys-335 is a binding site for ATP.

Belongs to the class-I aminoacyl-tRNA synthetase family.

Its subcellular location is the mitochondrion matrix. The catalysed reaction is tRNA(Met) + L-methionine + ATP = L-methionyl-tRNA(Met) + AMP + diphosphate. The sequence is that of Methionine--tRNA ligase, mitochondrial (mars2) from Xenopus laevis (African clawed frog).